We begin with the raw amino-acid sequence, 89 residues long: DNA-directed RNA polymerase subunit Rpo6 (89 aa).

The protein belongs to the archaeal Rpo6/eukaryotic RPB6 RNA polymerase subunit family. As to quaternary structure, part of the RNA polymerase complex.

The protein resides in the cytoplasm. The catalysed reaction is RNA(n) + a ribonucleoside 5'-triphosphate = RNA(n+1) + diphosphate. DNA-dependent RNA polymerase (RNAP) catalyzes the transcription of DNA into RNA using the four ribonucleoside triphosphates as substrates. The protein is DNA-directed RNA polymerase subunit Rpo6 of Aeropyrum pernix (strain ATCC 700893 / DSM 11879 / JCM 9820 / NBRC 100138 / K1).